We begin with the raw amino-acid sequence, 380 residues long: Queuine tRNA-ribosyltransferase (380 aa).

D96 (proton acceptor) is an active-site residue. Substrate contacts are provided by residues 96-100 (DSGGF), D150, Q193, and G220. Positions 251–257 (GVGAPDS) are RNA binding. Catalysis depends on D270, which acts as the Nucleophile. Positions 275–279 (TRIAR) are RNA binding; important for wobble base 34 recognition. Positions 308, 310, 313, and 339 each coordinate Zn(2+).

The protein belongs to the queuine tRNA-ribosyltransferase family. Homodimer. Within each dimer, one monomer is responsible for RNA recognition and catalysis, while the other monomer binds to the replacement base PreQ1. Zn(2+) serves as cofactor.

It carries out the reaction 7-aminomethyl-7-carbaguanine + guanosine(34) in tRNA = 7-aminomethyl-7-carbaguanosine(34) in tRNA + guanine. It participates in tRNA modification; tRNA-queuosine biosynthesis. Functionally, catalyzes the base-exchange of a guanine (G) residue with the queuine precursor 7-aminomethyl-7-deazaguanine (PreQ1) at position 34 (anticodon wobble position) in tRNAs with GU(N) anticodons (tRNA-Asp, -Asn, -His and -Tyr). Catalysis occurs through a double-displacement mechanism. The nucleophile active site attacks the C1' of nucleotide 34 to detach the guanine base from the RNA, forming a covalent enzyme-RNA intermediate. The proton acceptor active site deprotonates the incoming PreQ1, allowing a nucleophilic attack on the C1' of the ribose to form the product. After dissociation, two additional enzymatic reactions on the tRNA convert PreQ1 to queuine (Q), resulting in the hypermodified nucleoside queuosine (7-(((4,5-cis-dihydroxy-2-cyclopenten-1-yl)amino)methyl)-7-deazaguanosine). This chain is Queuine tRNA-ribosyltransferase, found in Streptococcus thermophilus (strain CNRZ 1066).